The chain runs to 146 residues: Cytidine deaminase (146 aa).

The CMP/dCMP-type deaminase domain occupies 13 to 140; it reads ECVQQLLVCS…ELLPSSFGPE (128 aa). 54–60 contributes to the substrate binding site; it reads NIENACY. Cys-65 is a binding site for Zn(2+). Glu-67 (proton donor) is an active-site residue. The Zn(2+) site is built by Cys-99 and Cys-102.

It belongs to the cytidine and deoxycytidylate deaminase family. As to quaternary structure, homotetramer. It depends on Zn(2+) as a cofactor. Highly expressed in granulocytes while expression is very low in fibroblasts, chondrocytes, monocytes, and T- as well as B-cell lines.

It carries out the reaction cytidine + H2O + H(+) = uridine + NH4(+). The catalysed reaction is 2'-deoxycytidine + H2O + H(+) = 2'-deoxyuridine + NH4(+). Functionally, this enzyme scavenges exogenous and endogenous cytidine and 2'-deoxycytidine for UMP synthesis. In Homo sapiens (Human), this protein is Cytidine deaminase.